A 373-amino-acid polypeptide reads, in one-letter code: 4-hydroxy-3-methylbut-2-en-1-yl diphosphate synthase (flavodoxin) (373 aa).

Positions 268, 271, 303, and 310 each coordinate [4Fe-4S] cluster.

The protein belongs to the IspG family. The cofactor is [4Fe-4S] cluster.

The catalysed reaction is (2E)-4-hydroxy-3-methylbut-2-enyl diphosphate + oxidized [flavodoxin] + H2O + 2 H(+) = 2-C-methyl-D-erythritol 2,4-cyclic diphosphate + reduced [flavodoxin]. It functions in the pathway isoprenoid biosynthesis; isopentenyl diphosphate biosynthesis via DXP pathway; isopentenyl diphosphate from 1-deoxy-D-xylulose 5-phosphate: step 5/6. Functionally, converts 2C-methyl-D-erythritol 2,4-cyclodiphosphate (ME-2,4cPP) into 1-hydroxy-2-methyl-2-(E)-butenyl 4-diphosphate. The polypeptide is 4-hydroxy-3-methylbut-2-en-1-yl diphosphate synthase (flavodoxin) (Exiguobacterium sp. (strain ATCC BAA-1283 / AT1b)).